A 729-amino-acid polypeptide reads, in one-letter code: Cytoplasmic polyadenylation element-binding protein 4 (729 aa).

2 disordered regions span residues 20–50 (FPVR…NNTA) and 78–133 (EKAK…KEKL). Residues 24–35 (FHPHLQPPHHHQ) show a composition bias toward basic residues. Residues 83-96 (QQQEQQDPLEKQQL) show a composition bias toward low complexity. Phosphoserine is present on residues Ser97, Ser99, and Ser137. Positions 218–324 (FGGSFSPQIG…RDHRRGLNGG (107 aa)) are disordered. Over residues 232–249 (HHPHHPHFQHHHSQHQQQ) the composition is skewed to basic residues. Phosphoserine occurs at positions 252 and 255. Over residues 285 to 300 (WSSYQSPSPTPSSSWS) the composition is skewed to low complexity. A compositionally biased stretch (gly residues) spans 301 to 311 (PGGGGYGGWGA). The residue at position 326 (Thr326) is a Phosphothreonine. Phosphoserine occurs at positions 330 and 332. 2 RRM domains span residues 472–563 (RKVF…PWNL) and 580–662 (KTIF…PYVL). The interval 541-543 (KLY) is RNA-binding. Zn(2+) is bound by residues Cys667, Cys675, Cys684, Cys689, Cys694, Cys697, His702, and His710.

It belongs to the RRM CPEB family. In terms of assembly, interacts with TOB1. As to expression, highly expressed in brain, including hippocampus, amygdala, granule and Purkinje cells of the cerebellum (at protein level). Expressed in spinal cord (at protein level). Expressed in kidney, lung and heart (at protein level). Expressed in liver (at protein level). Expressed in spleen and testis (at protein level). Weakly expressed in ovary and in granular cells of dentate gyrus and the pyramidal cells of CA3 and CA1 of the hippocampus.

It is found in the cytoplasm. The protein resides in the cell projection. It localises to the dendrite. Its subcellular location is the dendritic spine. The protein localises to the postsynaptic density. It is found in the axon. The protein resides in the growth cone. It localises to the endoplasmic reticulum. Its subcellular location is the perinuclear region. Sequence-specific RNA-binding protein that binds to the cytoplasmic polyadenylation element (CPE), an uridine-rich sequence element (consensus sequence 5'-UUUUUAU-3') within the mRNA 3'-UTR. RNA binding results in a clear conformational change analogous to the Venus fly trap mechanism. Regulates activation of unfolded protein response (UPR) in the process of adaptation to ER stress in liver, by maintaining translation of CPE-regulated mRNAs in conditions in which global protein synthesis is inhibited. Required for cell cycle progression, specifically for cytokinesis and chromosomal segregation. Plays a role as an oncogene promoting tumor growth and progression by positively regulating translation of t-plasminogen activator/PLAT. Stimulates proliferation of melanocytes. In contrast to CPEB1 and CPEB3, does not play role in synaptic plasticity, learning and memory. This chain is Cytoplasmic polyadenylation element-binding protein 4 (Cpeb4), found in Mus musculus (Mouse).